We begin with the raw amino-acid sequence, 153 residues long: Subtilisin propeptide-like protein (153 aa).

The N-terminal stretch at 1–27 (MKFLFAFNFFSLYIYLYEFLCIHLCGS) is a signal peptide. The segment at 127-153 (QISHLSEFIQYLLNKNVCIEFNQNVML) is dispensable for parasite growth in host erythrocytes.

The protein resides in the secreted. The protein localises to the parasitophorous vacuole lumen. It localises to the cell membrane. In terms of biological role, acts as a specific inhibitor of subtilisin-like protease SUB1. The sequence is that of Subtilisin propeptide-like protein from Plasmodium falciparum (isolate 3D7).